Reading from the N-terminus, the 289-residue chain is UPF0276 protein BP2925 (289 aa).

Belongs to the UPF0276 family.

The polypeptide is UPF0276 protein BP2925 (Bordetella pertussis (strain Tohama I / ATCC BAA-589 / NCTC 13251)).